The primary structure comprises 470 residues: E3 SUMO-protein ligase EGR2 (470 aa).

Residues 126 to 141 (PPASTTASSSVTSASP) are compositionally biased toward low complexity. Disordered regions lie at residues 126 to 153 (PPASTTASSSVTSASPNPLATGPLGVCT), 159 to 178 (PELDHLYSPPPPPPPYSGCT), and 185 to 210 (PSAFLSPPSTTSTSSLAYQPPPSYPS). A compositionally biased stretch (low complexity) spans 190–202 (SPPSTTSTSSLAY). Lys247 carries the N6-acetyllysine; by EP300 modification. Residues 275–291 (GPGAGVTGPGASGGGEG) are compositionally biased toward gly residues. The interval 275–345 (GPGAGVTGPG…PYPCPAEGCD (71 aa)) is disordered. 3 consecutive C2H2-type zinc fingers follow at residues 337-361 (YPCPAEGCDRRFSRSDELTRHIRIH), 367-389 (FQCRICMRNFSRSDHLTTHIRTH), and 395-417 (FACDYCGRKFARSDERKRHTKIH). Residues 408–470 (DERKRHTKIH…ASCTSRTRTP (63 aa)) are disordered. A compositionally biased stretch (basic residues) spans 412–422 (RHTKIHLRQKE). The span at 426–439 (SAPSAPPSAQSSAS) shows a compositional bias: low complexity. Gly residues predominate over residues 440-450 (GPGGSQAGGSL).

The protein belongs to the EGR C2H2-type zinc-finger protein family. As to quaternary structure, interacts with HCFC1. Interacts with WWP2. Interacts with UBC9. Interacts with CITED1. Interacts (via phosphorylated form) with SFN. Post-translationally, ubiquitinated by WWP2 leading to proteasomal degradation. In terms of processing, acetylated at Lys-247. May be deacetylated by HDAC6, HDAC10 or SIRT1. As to expression, expressed mainly in the thymus.

Its subcellular location is the nucleus. It participates in protein modification; protein sumoylation. Sequence-specific DNA-binding transcription factor. Plays a role in hindbrain segmentation by regulating the expression of a subset of homeobox containing genes and in Schwann cell myelination by regulating the expression of genes involved in the formation and maintenance of myelin. Binds to two EGR2-consensus sites EGR2A (5'-CTGTAGGAG-3') and EGR2B (5'-ATGTAGGTG-3') in the HOXB3 enhancer and promotes HOXB3 transcriptional activation. Binds to specific DNA sites located in the promoter region of HOXA4, HOXB2 and ERBB2. Regulates hindbrain segmentation by controlling the expression of Hox genes, such as HOXA4, HOXB3 and HOXB2, and thereby specifying odd and even rhombomeres. Promotes the expression of HOXB3 in the rhombomere r5 and of HOXB3 in r3 and r5 in the hindbrain. Regulates myelination in the peripheral nervous system after birth, possibly by regulating the expression of myelin proteins, such as MPZ, and by promoting the differentiation of Schwann cells. Involved in the development of the jaw openener musculature, probably by playing a role in its innervation through trigeminal motor neurons. May play a role in adipogenesis, possibly by regulating the expression of CEBPB. Its function is as follows. E3 SUMO-protein ligase helping SUMO1 conjugation to its coregulators NAB1 and NAB2, whose sumoylation down-regulates EGR2 transcriptional activity. This chain is E3 SUMO-protein ligase EGR2 (Egr2), found in Mus musculus (Mouse).